A 393-amino-acid polypeptide reads, in one-letter code: Phosphopentomutase (393 aa).

Mn(2+) contacts are provided by Asp-15, Asp-288, His-293, Asp-329, His-330, and His-341.

The protein belongs to the phosphopentomutase family. Mn(2+) serves as cofactor.

Its subcellular location is the cytoplasm. The enzyme catalyses 2-deoxy-alpha-D-ribose 1-phosphate = 2-deoxy-D-ribose 5-phosphate. The catalysed reaction is alpha-D-ribose 1-phosphate = D-ribose 5-phosphate. It participates in carbohydrate degradation; 2-deoxy-D-ribose 1-phosphate degradation; D-glyceraldehyde 3-phosphate and acetaldehyde from 2-deoxy-alpha-D-ribose 1-phosphate: step 1/2. Isomerase that catalyzes the conversion of deoxy-ribose 1-phosphate (dRib-1-P) and ribose 1-phosphate (Rib-1-P) to deoxy-ribose 5-phosphate (dRib-5-P) and ribose 5-phosphate (Rib-5-P), respectively. The protein is Phosphopentomutase of Halalkalibacterium halodurans (strain ATCC BAA-125 / DSM 18197 / FERM 7344 / JCM 9153 / C-125) (Bacillus halodurans).